Reading from the N-terminus, the 414-residue chain is Secernin-1 (414 aa).

It belongs to the peptidase C69 family. Secernin subfamily.

It is found in the cytoplasm. In terms of biological role, regulates exocytosis in mast cells. Increases both the extent of secretion and the sensitivity of mast cells to stimulation with calcium. This Rattus norvegicus (Rat) protein is Secernin-1 (Scrn1).